A 119-amino-acid chain; its full sequence is Iron-sulfur cluster insertion protein ErpA (119 aa).

Iron-sulfur cluster is bound by residues Cys-47, Cys-111, and Cys-113.

This sequence belongs to the HesB/IscA family. As to quaternary structure, homodimer. Iron-sulfur cluster is required as a cofactor.

In terms of biological role, required for insertion of 4Fe-4S clusters for at least IspG. In Alcanivorax borkumensis (strain ATCC 700651 / DSM 11573 / NCIMB 13689 / SK2), this protein is Iron-sulfur cluster insertion protein ErpA.